A 509-amino-acid chain; its full sequence is Butyrophilin-like protein 1 (509 aa).

The signal sequence occupies residues M1–G27. Ig-like V-type domains are found at residues E28–S139 and P151–L237. Residues E28–K250 are Extracellular-facing. Intrachain disulfides connect C53-C127 and C167-C221. A helical membrane pass occupies residues V251–I271. The Cytoplasmic portion of the chain corresponds to W272 to P509. The B30.2/SPRY domain maps to R316–P509. Positions M349–Q372 are disordered. The segment covering D351–E366 has biased composition (basic and acidic residues).

The protein belongs to the immunoglobulin superfamily. BTN/MOG family.

The protein localises to the membrane. This Mus musculus (Mouse) protein is Butyrophilin-like protein 1 (Btnl1).